Here is a 229-residue protein sequence, read N- to C-terminus: Protein-L-isoaspartate O-methyltransferase (229 aa).

Serine 74 is an active-site residue.

It belongs to the methyltransferase superfamily. L-isoaspartyl/D-aspartyl protein methyltransferase family.

The protein resides in the cytoplasm. The enzyme catalyses [protein]-L-isoaspartate + S-adenosyl-L-methionine = [protein]-L-isoaspartate alpha-methyl ester + S-adenosyl-L-homocysteine. In terms of biological role, catalyzes the methyl esterification of L-isoaspartyl residues in peptides and proteins that result from spontaneous decomposition of normal L-aspartyl and L-asparaginyl residues. It plays a role in the repair and/or degradation of damaged proteins. This Pelotomaculum thermopropionicum (strain DSM 13744 / JCM 10971 / SI) protein is Protein-L-isoaspartate O-methyltransferase.